The following is a 36-amino-acid chain: Asteropin-A (36 aa).

Cystine bridges form between C2-C18, C9-C25, and C17-C35.

Its function is as follows. Sialidase inhibitor. Competitively inhibits bacterial sialidases, but not viral sialidases. Does not inhibit glycosidases or proteases. Has no antitumor activity. The sequence is that of Asteropin-A from Asteropus simplex (Marine sponge).